A 194-amino-acid polypeptide reads, in one-letter code: MRESSQIRETTETKIKLSLQLDEGKNVSVQTGVGFFDHMLTLFARHGRFGLQVEAEGDVFVDAHHTVEDVGIVLGNCLKEALQNKEGINRYGSAYVPMDESLGFVAIDISGRSYIVFQGELTNPKLGDFDTELTEEFFRAVAHAANITLHARILYGSNTHHKIEALFKAFGRALREAVERNAHITGVNSTKGML.

It belongs to the imidazoleglycerol-phosphate dehydratase family.

The protein localises to the cytoplasm. The enzyme catalyses D-erythro-1-(imidazol-4-yl)glycerol 3-phosphate = 3-(imidazol-4-yl)-2-oxopropyl phosphate + H2O. It participates in amino-acid biosynthesis; L-histidine biosynthesis; L-histidine from 5-phospho-alpha-D-ribose 1-diphosphate: step 6/9. This chain is Imidazoleglycerol-phosphate dehydratase, found in Bacillus anthracis (strain A0248).